We begin with the raw amino-acid sequence, 2159 residues long: ATP-binding cassette sub-family A member 7 (2159 aa).

A helical transmembrane segment spans residues 22–42 (PIQLLVELLWPLFLFFILVAV). The Extracellular portion of the chain corresponds to 43 to 546 (RHSHPPLEHH…DVFLRVLSRS (504 aa)). The cysteines at positions 75 and 222 are disulfide-linked. Asn-309 carries an N-linked (GlcNAc...) asparagine glycan. A run of 6 helical transmembrane segments spans residues 547–567 (LPLF…KAVV), 590–610 (LGWF…LVLV), 623–643 (VVIF…SFLL), 652–672 (LAAA…VLCV), 678–698 (LHLG…GFGC), and 732–752 (AFLL…EAVC). The region spanning 804–1035 (VSIRGLKKHF…LGCGYYLTLV (232 aa)) is the ABC transporter 1 domain. 838 to 845 (GHNGAGKT) serves as a coordination point for ATP. The chain crosses the membrane as a helical span at residues 846–866 (TTLSILSGLFPPSSGSASILG). Disordered regions lie at residues 1042-1088 (VTHD…GAVP) and 1172-1192 (GGDS…PTGP). A compositionally biased stretch (basic and acidic residues) spans 1044–1061 (HDAKGDSEDPRREKKSDG). Residues 1062-1081 (NGRTSDTAFTRGTSDKSNQA) show a composition bias toward polar residues. A helical membrane pass occupies residues 1246-1266 (VVLPALFVGLALFFSLIVPPF). Residues 1267–1551 (GQYPPLQLSP…TLIASSVDVL (285 aa)) are Extracellular-facing. Cys-1359 and Cys-1373 are disulfide-bonded. 5 consecutive transmembrane segments (helical) span residues 1552-1572 (VSIC…LVLI), 1598-1618 (FLWD…IFLA), 1635-1655 (LLLL…SFFF), 1663-1683 (VVLT…TFVL), and 1743-1763 (IIGK…LITL). The 233-residue stretch at 1807-2039 (LVLRDLTKVY…FGAGHTLTLR (233 aa)) folds into the ABC transporter 2 domain. 1841–1848 (GVNGAGKT) lines the ATP pocket. The interval 2118–2159 (QGEEEESSRQEAEEEEVSKPGRQHPKRVSRFLEDPSSVETMI) is disordered. The segment covering 2119 to 2133 (GEEEESSRQEAEEEE) has biased composition (acidic residues).

The protein belongs to the ABC transporter superfamily. ABCA family. N-glycosylated. As to expression, widely expressed with higher expression in brain, lung, adrenal gland, spleen and hematopoietic tissues (at protein level). In the brain, expressed in cortex, cerebellum, hippocampus, olfactory bulb, neurons, astrocytes and microglia (at protein level). Also expressed in adipocytes and macrophages (at protein level). Expressed in thymocytes (at protein level). Highly expressed in spleen and hematopoietic tissues. Expressed in brain, lung, macrophages, microglia, oligodendrocytes and neurons.

Its subcellular location is the cell membrane. The protein resides in the golgi apparatus membrane. The protein localises to the early endosome membrane. It is found in the cytoplasm. It localises to the cell projection. Its subcellular location is the ruffle membrane. The protein resides in the phagocytic cup. Probable ATP-binding cassette (ABC) transporter that plays a role in lipid homeostasis and macrophage-mediated phagocytosis. Binds APOA1 and may function in apolipoprotein-mediated phospholipid efflux from cells. May also mediate cholesterol efflux. May regulate cellular ceramide homeostasis during keratinocyte differentiation. Involved in lipid raft organization and CD1D localization on thymocytes and antigen-presenting cells, which plays an important role in natural killer T-cell development and activation. Plays a role in phagocytosis of apoptotic cells by macrophages. Macrophage phagocytosis is stimulated by APOA1 or APOA2, probably by stabilization of ABCA7. Also involved in phagocytic clearance of amyloid-beta by microglia cells and macrophages. Further limits amyloid-beta production by playing a role in the regulation of amyloid-beta A4 precursor protein (APP) endocytosis and/or processing. This chain is ATP-binding cassette sub-family A member 7 (Abca7), found in Mus musculus (Mouse).